A 562-amino-acid chain; its full sequence is Gut esterase 1 (562 aa).

An N-terminal signal peptide occupies residues 1–16; that stretch reads MRIFLVSVILINACWA. Asn-73 carries an N-linked (GlcNAc...) asparagine; atypical glycan. Cys-75 and Cys-93 are joined by a disulfide. Ser-198 functions as the Acyl-ester intermediate in the catalytic mechanism. Cysteines 250 and 258 form a disulfide. Residues Glu-319 and His-452 each act as charge relay system in the active site. The short motif at 559 to 562 is the Prevents secretion from ER element; that stretch reads KDEL.

This sequence belongs to the type-B carboxylesterase/lipase family. In terms of tissue distribution, expressed only in the intestine.

It is found in the endoplasmic reticulum lumen. It catalyses the reaction a carboxylic ester + H2O = an alcohol + a carboxylate + H(+). This is Gut esterase 1 (ges-1) from Caenorhabditis elegans.